The chain runs to 130 residues: Small ribosomal subunit protein uS9 (130 aa).

The interval 102 to 130 is disordered; it reads GLLTRDSRMKERKKPGLKGARRAPQFSKR. Positions 111–130 are enriched in basic residues; that stretch reads KERKKPGLKGARRAPQFSKR.

This sequence belongs to the universal ribosomal protein uS9 family.

The polypeptide is Small ribosomal subunit protein uS9 (Listeria monocytogenes serovar 1/2a (strain ATCC BAA-679 / EGD-e)).